The chain runs to 396 residues: MMFRTLDDANVQSKRVLVRVDLNVPMANGEVTDLTRIERIVPTIAELSRKGAKVILLAHFGRPKGVASDENSLKHVVKPLSKVLDHSVHFAEDCIGDKAKAAVDALKDGDVLLLENTRFHKGEEKNDPEFVQALAANGDLYVNDAFSAAHRAHASTEGLAHVLPAFAGRAMQAELEALEKGLGNPARPVVAIVGGAKVSTKLDLLSNLIEKVDALVIGGGMANTFLAAKGLDVGKSLCEHELASTAREIMAKAETTKCAIILPVDAIVGWHFAADTPHQTYGVDSVPGDAMILDAGELSTDLIASAIDDAATLVWNGPLGAFELRPFDTATVKVARHVAKRTKEGKLVSVGGGGDTVAALNHAGVADDFTYISTAGGAFLEWMEGKPLPGVDVLKK.

Substrate is bound by residues 21–23 (DLN), R36, 59–62 (HFGR), R118, and R151. ATP contacts are provided by residues K201, E323, and 353-356 (GGDT).

The protein belongs to the phosphoglycerate kinase family. As to quaternary structure, monomer.

The protein resides in the cytoplasm. The enzyme catalyses (2R)-3-phosphoglycerate + ATP = (2R)-3-phospho-glyceroyl phosphate + ADP. It functions in the pathway carbohydrate degradation; glycolysis; pyruvate from D-glyceraldehyde 3-phosphate: step 2/5. The sequence is that of Phosphoglycerate kinase from Brucella melitensis biotype 1 (strain ATCC 23456 / CCUG 17765 / NCTC 10094 / 16M).